Here is a 376-residue protein sequence, read N- to C-terminus: UDP-N-acetylglucosamine--N-acetylmuramyl-(pentapeptide) pyrophosphoryl-undecaprenol N-acetylglucosamine transferase (376 aa).

UDP-N-acetyl-alpha-D-glucosamine-binding positions include 11–13, Asn117, Arg160, Ser208, and Gln310; that span reads TGG.

Belongs to the glycosyltransferase 28 family. MurG subfamily.

The protein localises to the cell inner membrane. The catalysed reaction is di-trans,octa-cis-undecaprenyl diphospho-N-acetyl-alpha-D-muramoyl-L-alanyl-D-glutamyl-meso-2,6-diaminopimeloyl-D-alanyl-D-alanine + UDP-N-acetyl-alpha-D-glucosamine = di-trans,octa-cis-undecaprenyl diphospho-[N-acetyl-alpha-D-glucosaminyl-(1-&gt;4)]-N-acetyl-alpha-D-muramoyl-L-alanyl-D-glutamyl-meso-2,6-diaminopimeloyl-D-alanyl-D-alanine + UDP + H(+). The protein operates within cell wall biogenesis; peptidoglycan biosynthesis. Cell wall formation. Catalyzes the transfer of a GlcNAc subunit on undecaprenyl-pyrophosphoryl-MurNAc-pentapeptide (lipid intermediate I) to form undecaprenyl-pyrophosphoryl-MurNAc-(pentapeptide)GlcNAc (lipid intermediate II). In Rickettsia massiliae (strain Mtu5), this protein is UDP-N-acetylglucosamine--N-acetylmuramyl-(pentapeptide) pyrophosphoryl-undecaprenol N-acetylglucosamine transferase.